Reading from the N-terminus, the 437-residue chain is MSSNDQINRTRALELALANIDRQYGKGAVMRMNDAQKAYIDVIPTGSIALDYALGVGGLPRGRIVEIYGPESSGKTTLTLHAIASVQRAGGIAAFIDAEHALDPEYAKKLGVDIDALLVSQPDSGEQALEISDMLIRSTAIDLIVIDSVAALVPRAELEGDMGDMHVGLQARLMSQALRKITSGLNQTGTTAIFINQLREKVGVFFGSPETTPGGRALKFYASVRLDIRRVETIKQGTEAVGNRTRVKVVKNKVAPPFKQAEFDVLYGVGISRESGLIDFAVDRGIIKKSGSWYVYGDDQLGQGKENARRFLLENKSVADEIENKIISLLGFRSNEFGDLPDHDAAVRTSPDTNSRKVSGTGAVHTTSGSPSAGKGTASGAVNNSRDSTGGDTPAGQGPLNLSVNRDVSTDTVSSKISDATHNQKPAGNGKSVKRKG.

69 to 76 (GPESSGKT) contributes to the ATP binding site. Residues 343–437 (HDAAVRTSPD…GNGKSVKRKG (95 aa)) are disordered. Polar residues-rich tracts occupy residues 350–371 (SPDT…SGSP), 380–391 (GAVNNSRDSTGG), and 400–426 (LNLS…NQKP).

It belongs to the RecA family.

The protein localises to the cytoplasm. Functionally, can catalyze the hydrolysis of ATP in the presence of single-stranded DNA, the ATP-dependent uptake of single-stranded DNA by duplex DNA, and the ATP-dependent hybridization of homologous single-stranded DNAs. It interacts with LexA causing its activation and leading to its autocatalytic cleavage. This Tropheryma whipplei (strain Twist) (Whipple's bacillus) protein is Protein RecA.